The following is a 300-amino-acid chain: Inosose dehydratase (300 aa).

This sequence belongs to the IolE/MocC family. Glutathione serves as cofactor. It depends on Co(2+) as a cofactor. The cofactor is Mn(2+).

The enzyme catalyses scyllo-inosose = 3D-3,5/4-trihydroxycyclohexane-1,2-dione + H2O. Catalyzes the dehydration of inosose (2-keto-myo-inositol, 2KMI or 2,4,6/3,5-pentahydroxycyclohexanone) to 3D-(3,5/4)-trihydroxycyclohexane-1,2-dione (D-2,3-diketo-4-deoxy-epi-inositol). This Mesomycoplasma hyopneumoniae (strain J / ATCC 25934 / NCTC 10110) (Mycoplasma hyopneumoniae) protein is Inosose dehydratase.